The primary structure comprises 1073 residues: DNA-directed RNA polymerase subunit beta (1073 aa).

Belongs to the RNA polymerase beta chain family. As to quaternary structure, in plastids the minimal PEP RNA polymerase catalytic core is composed of four subunits: alpha, beta, beta', and beta''. When a (nuclear-encoded) sigma factor is associated with the core the holoenzyme is formed, which can initiate transcription.

It localises to the plastid. The protein resides in the chloroplast. It catalyses the reaction RNA(n) + a ribonucleoside 5'-triphosphate = RNA(n+1) + diphosphate. In terms of biological role, DNA-dependent RNA polymerase catalyzes the transcription of DNA into RNA using the four ribonucleoside triphosphates as substrates. This Aethionema cordifolium (Lebanon stonecress) protein is DNA-directed RNA polymerase subunit beta.